Consider the following 88-residue polypeptide: Small ribosomal subunit protein uS15 (88 aa).

The protein belongs to the universal ribosomal protein uS15 family. In terms of assembly, part of the 30S ribosomal subunit. Forms a bridge to the 50S subunit in the 70S ribosome, contacting the 23S rRNA.

In terms of biological role, one of the primary rRNA binding proteins, it binds directly to 16S rRNA where it helps nucleate assembly of the platform of the 30S subunit by binding and bridging several RNA helices of the 16S rRNA. Forms an intersubunit bridge (bridge B4) with the 23S rRNA of the 50S subunit in the ribosome. The chain is Small ribosomal subunit protein uS15 from Borrelia hermsii (strain HS1 / DAH).